A 328-amino-acid chain; its full sequence is Ferredoxin--NADP reductase (328 aa).

Residues serine 14, glutamate 33, glutamine 41, tyrosine 46, isoleucine 90, and phenylalanine 126 each coordinate FAD.

Belongs to the ferredoxin--NADP reductase type 2 family. In terms of assembly, homodimer. FAD serves as cofactor.

The enzyme catalyses 2 reduced [2Fe-2S]-[ferredoxin] + NADP(+) + H(+) = 2 oxidized [2Fe-2S]-[ferredoxin] + NADPH. This Mycoplasmoides gallisepticum (strain R(low / passage 15 / clone 2)) (Mycoplasma gallisepticum) protein is Ferredoxin--NADP reductase.